An 880-amino-acid chain; its full sequence is Probable LRR receptor-like serine/threonine-protein kinase At2g28960 (880 aa).

The first 24 residues, 1–24, serve as a signal peptide directing secretion; it reads MEGRRQRLLVFIFGALAITHLVQA. The Extracellular segment spans residues 25–511; the sequence is QPPDQRGFIS…NNNNQTYIVP (487 aa). N-linked (GlcNAc...) asparagine glycosylation is found at asparagine 180, asparagine 201, asparagine 228, asparagine 254, asparagine 287, asparagine 403, asparagine 430, and asparagine 441. LRR repeat units follow at residues 409-430, 433-455, and 457-476; these read RIISLDLSSRGLKGVIAPAFQN, ELRKLDLSNNSFTGGVPEFLASM, and SLSIINLNWNDLTGPLPKLL. Asparagine 505 carries an N-linked (GlcNAc...) asparagine glycan. The chain crosses the membrane as a helical span at residues 512-532; the sequence is VVASVASVLIIIAVLILILVF. Residues 533–880 lie on the Cytoplasmic side of the membrane; it reads KKRRPTQVDS…FTTEINPKAR (348 aa). At threonine 564 the chain carries Phosphothreonine. The 274-residue stretch at 573–846 folds into the Protein kinase domain; that stretch reads DNFERVLGEG…QVTNELKQCL (274 aa). Residues 579-587 and lysine 601 each bind ATP; that span reads LGEGGFGVV. A Phosphotyrosine modification is found at tyrosine 646. Aspartate 698 (proton acceptor) is an active-site residue. Serine 732 carries the phosphoserine modification. 2 positions are modified to phosphothreonine: threonine 733 and threonine 738. Tyrosine 746 bears the Phosphotyrosine mark. Residues 854 to 880 form a disordered region; that stretch reads GVREDMGSRSSVEMSTSFTTEINPKAR. The segment covering 861–880 has biased composition (polar residues); sequence SRSSVEMSTSFTTEINPKAR.

The protein belongs to the protein kinase superfamily. Ser/Thr protein kinase family.

Its subcellular location is the membrane. The catalysed reaction is L-seryl-[protein] + ATP = O-phospho-L-seryl-[protein] + ADP + H(+). The enzyme catalyses L-threonyl-[protein] + ATP = O-phospho-L-threonyl-[protein] + ADP + H(+). This Arabidopsis thaliana (Mouse-ear cress) protein is Probable LRR receptor-like serine/threonine-protein kinase At2g28960.